A 205-amino-acid chain; its full sequence is Protein PYRAB00100 (205 aa).

In terms of domain architecture, AMMECR1 spans 7 to 201 (EWGEFLVRLA…EEYPRGPVRR (195 aa)).

The protein is Protein PYRAB00100 of Pyrococcus abyssi (strain GE5 / Orsay).